Here is a 271-residue protein sequence, read N- to C-terminus: 4-diphosphocytidyl-2-C-methyl-D-erythritol kinase (271 aa).

The active site involves lysine 17. 97–107 contacts ATP; that stretch reads PVGSGLGGGSS. Residue aspartate 137 is part of the active site.

The protein belongs to the GHMP kinase family. IspE subfamily.

It catalyses the reaction 4-CDP-2-C-methyl-D-erythritol + ATP = 4-CDP-2-C-methyl-D-erythritol 2-phosphate + ADP + H(+). It participates in isoprenoid biosynthesis; isopentenyl diphosphate biosynthesis via DXP pathway; isopentenyl diphosphate from 1-deoxy-D-xylulose 5-phosphate: step 3/6. Its function is as follows. Catalyzes the phosphorylation of the position 2 hydroxy group of 4-diphosphocytidyl-2C-methyl-D-erythritol. The polypeptide is 4-diphosphocytidyl-2-C-methyl-D-erythritol kinase (Thermotoga petrophila (strain ATCC BAA-488 / DSM 13995 / JCM 10881 / RKU-1)).